A 176-amino-acid polypeptide reads, in one-letter code: Large ribosomal subunit protein uL6 (176 aa).

The protein belongs to the universal ribosomal protein uL6 family. As to quaternary structure, part of the 50S ribosomal subunit.

This protein binds to the 23S rRNA, and is important in its secondary structure. It is located near the subunit interface in the base of the L7/L12 stalk, and near the tRNA binding site of the peptidyltransferase center. In Burkholderia ambifaria (strain ATCC BAA-244 / DSM 16087 / CCUG 44356 / LMG 19182 / AMMD) (Burkholderia cepacia (strain AMMD)), this protein is Large ribosomal subunit protein uL6.